We begin with the raw amino-acid sequence, 81 residues long: Cytoplasmic envelopment protein 3 (81 aa).

Residue Gly-2 is the site of N-myristoyl glycine; by host attachment. The short motif at 22–23 is the Di-leucine-like internalization motif element; sequence LV. Positions 41–47 are asp/Glu-rich (acidic); that stretch reads DFDENVT. The segment at 47-81 is disordered; it reads TEDADKSTQRRPRVIDVTPKRKPSGKSSHSKCAKC. A compositionally biased stretch (basic residues) spans 66 to 81; sequence KRKPSGKSSHSKCAKC.

The protein belongs to the herpesviridae cytoplasmic envelopment protein 3 family. As to quaternary structure, interacts with cytoplasmic envelopment protein 2; this interaction is essential for the proper localization of each protein to the assembly complex and thus for the production of infectious virus. Post-translationally, myristoylation and palmitoylation (probably on one or more of the nearby cysteines at the N-terminus) enable membrane-binding and Golgi apparatus-specific targeting and are essential for efficient packaging. Phosphorylated. Phosphorylation does not seem to be required for recycling to the host Golgi apparatus. Packaging is selective for underphosphorylated forms.

It is found in the virion tegument. The protein resides in the virion membrane. It localises to the host cell membrane. The protein localises to the host Golgi apparatus membrane. In terms of biological role, plays an important role in the cytoplasmic envelopment of tegument proteins and capsids during the assembly and egress processes. Also participates in viral entry at the fusion step probably by regulating the core fusion machinery. This is Cytoplasmic envelopment protein 3 from Homo sapiens (Human).